A 131-amino-acid polypeptide reads, in one-letter code: Profilin-4 (131 aa).

Residues cysteine 13 and cysteine 115 are joined by a disulfide bond. The Involved in PIP2 interaction motif lies at 81-97 (AVIRGKKGAGGITIKKT). The residue at position 111 (threonine 111) is a Phosphothreonine.

This sequence belongs to the profilin family. Occurs in many kinds of cells as a complex with monomeric actin in a 1:1 ratio. Post-translationally, phosphorylated by MAP kinases.

It localises to the cytoplasm. The protein resides in the cytoskeleton. Binds to actin and affects the structure of the cytoskeleton. At high concentrations, profilin prevents the polymerization of actin, whereas it enhances it at low concentrations. The chain is Profilin-4 from Phleum pratense (Common timothy).